The sequence spans 196 residues: Probable GTP-binding protein EngB (196 aa).

Residues 24–196 (ELSEVALSGR…IWNLIEPYIS (173 aa)) form the EngB-type G domain. GTP is bound by residues 32–39 (GRSNVGKS), 59–63 (GKTQT), 77–80 (DVPG), 144–147 (TKED), and 176–178 (YSS). Serine 39 and threonine 61 together coordinate Mg(2+).

The protein belongs to the TRAFAC class TrmE-Era-EngA-EngB-Septin-like GTPase superfamily. EngB GTPase family. It depends on Mg(2+) as a cofactor.

In terms of biological role, necessary for normal cell division and for the maintenance of normal septation. The polypeptide is Probable GTP-binding protein EngB (Staphylococcus aureus (strain MW2)).